Here is a 335-residue protein sequence, read N- to C-terminus: Serpentine receptor class alpha-25 (335 aa).

A run of 5 helical transmembrane segments spans residues 22-42 (IPVKISFLIIATVIFLSFYFA), 151-171 (LLIIQCLLSFGTYYVGLYGVP), 195-215 (FRTVVMVFCIIVIIFVYYLSV), 245-265 (CILIVLQFACILMSSYGVNYI), and 280-300 (LAPFFAGVTYASLCLPLVIYF).

Belongs to the nematode receptor-like protein sra family.

Its subcellular location is the membrane. This Caenorhabditis elegans protein is Serpentine receptor class alpha-25 (sra-25).